Consider the following 166-residue polypeptide: Vasopressin-neurophysin 2-copeptin (166 aa).

The N-terminal stretch at 1-19 is a signal peptide; the sequence is MPDATLPACFLSLLAFTSA. C20 and C25 are oxidised to a cystine. The residue at position 28 (G28) is a Glycine amide. Disulfide bonds link C41–C85, C44–C58, C52–C75, C59–C65, C92–C104, C98–C116, and C105–C110. N133 is a glycosylation site (N-linked (GlcNAc...) asparagine).

It belongs to the vasopressin/oxytocin family. Interacts with vasopressin receptors V1bR/AVPR1B (Ki=85 pM), V1aR/AVPR1A (Ki=0.6 nM) and V2R/AVPR2 (Ki=4.9 nM). Interacts with oxytocin receptor (OXTR) (Ki=110 nM).

The protein localises to the secreted. Neurophysin 2 specifically binds vasopressin. Functionally, vasopressin has a direct antidiuretic action on the kidney, it also causes vasoconstriction of the peripheral vessels. Acts by binding to vasopressin receptors (V1bR/AVPR1B, V1aR/AVPR1A, and V2R/AVPR2). The chain is Vasopressin-neurophysin 2-copeptin (AVP) from Bos taurus (Bovine).